Here is a 558-residue protein sequence, read N- to C-terminus: Polysialic acid transport protein KpsD (558 aa).

A signal peptide spans 1-20 (MKLFKSILLIAACHAAQASA).

It to E.coli K5 KpsD.

Its subcellular location is the periplasm. In terms of biological role, involved in the translocation of the polysialic acid capsule across the outer membrane to the cell surface. May function as the periplasmic binding element of the PSA transport system, in which it transiently interacts with the membrane component of the transporter, binds polysaccharide and transports the polymer to a component in the outer membrane. The protein is Polysialic acid transport protein KpsD (kpsD) of Escherichia coli.